Here is a 414-residue protein sequence, read N- to C-terminus: COUP transcription factor 2 (414 aa).

The disordered stretch occupies residues 1–72 (MAMVVSTWRD…PGGPGSDKQQ (72 aa)). A compositionally biased stretch (pro residues) spans 27–37 (PPVPGPPPGAP). Residues 38–54 (HTPQTPGQGGPASTPAQ) are compositionally biased toward low complexity. Thr51 is modified (phosphothreonine). A DNA-binding region (nuclear receptor) is located at residues 76 to 151 (HIECVVCGDK…VGMRREAVQR (76 aa)). 2 consecutive NR C4-type zinc fingers follow at residues 79–99 (CVVCGDKSSGKHYGQFTCEGC) and 115–139 (CRANRNCPIDQHHRNQCQYCRLKKC). The interaction with ZFPM2 stretch occupies residues 117 to 414 (ANRNCPIDQH…SFNWPYMAIQ (298 aa)). The NR LBD domain occupies 177-403 (YLSGYISLLL…TLIRDMLLSG (227 aa)). Residues 337-414 (LQEKSQCALE…SFNWPYMAIQ (78 aa)) form an important for dimerization region.

Belongs to the nuclear hormone receptor family. NR2 subfamily. Interacts with SQSTM1. Binds DNA as a dimer; homodimer or heterodimer with NR2F6. Interacts with NCOA1, NCOA2, NCOA3 and PPARGC1A. Interacts with ZFPM2.

It localises to the nucleus. In terms of biological role, ligand-activated transcription factor. Activated by high concentrations of 9-cis-retinoic acid and all-trans-retinoic acid, but not by dexamethasone, cortisol or progesterone (in vitro). Regulation of the apolipoprotein A-I gene transcription. Binds to DNA site A. May be required to establish ovary identity during early gonad development. In Rattus norvegicus (Rat), this protein is COUP transcription factor 2 (Nr2f2).